Here is a 287-residue protein sequence, read N- to C-terminus: Eukaryotic translation initiation factor 3 subunit G (287 aa).

Disordered stretches follow at residues 1–34 and 159–184; these read MSKLANRADWADDEEFDDPSALPAQQVTTNKDGT and TAGGAGEDDEAAAGAVGTGSGSYVPP. One can recognise an RRM domain in the interval 207–285; that stretch reads ATLRVTNVSE…LILRVEFAKR (79 aa).

Belongs to the eIF-3 subunit G family. In terms of assembly, component of the eukaryotic translation initiation factor 3 (eIF-3) complex.

It is found in the cytoplasm. RNA-binding component of the eukaryotic translation initiation factor 3 (eIF-3) complex, which is involved in protein synthesis of a specialized repertoire of mRNAs and, together with other initiation factors, stimulates binding of mRNA and methionyl-tRNAi to the 40S ribosome. The eIF-3 complex specifically targets and initiates translation of a subset of mRNAs involved in cell proliferation. This subunit can bind 18S rRNA. This is Eukaryotic translation initiation factor 3 subunit G (tif35) from Aspergillus oryzae (strain ATCC 42149 / RIB 40) (Yellow koji mold).